A 575-amino-acid chain; its full sequence is Dihydroxy-acid dehydratase (575 aa).

Position 64 (Cys64) interacts with [2Fe-2S] cluster. Residue Asp96 participates in Mg(2+) binding. Cys137 contributes to the [2Fe-2S] cluster binding site. Asp138 and Lys139 together coordinate Mg(2+). Lys139 carries the N6-carboxylysine modification. Cys214 is a [2Fe-2S] cluster binding site. Residue Glu465 coordinates Mg(2+). Ser491 acts as the Proton acceptor in catalysis.

It belongs to the IlvD/Edd family. Homodimer. [2Fe-2S] cluster serves as cofactor. Requires Mg(2+) as cofactor.

It catalyses the reaction (2R)-2,3-dihydroxy-3-methylbutanoate = 3-methyl-2-oxobutanoate + H2O. The catalysed reaction is (2R,3R)-2,3-dihydroxy-3-methylpentanoate = (S)-3-methyl-2-oxopentanoate + H2O. Its pathway is amino-acid biosynthesis; L-isoleucine biosynthesis; L-isoleucine from 2-oxobutanoate: step 3/4. It participates in amino-acid biosynthesis; L-valine biosynthesis; L-valine from pyruvate: step 3/4. Its function is as follows. Functions in the biosynthesis of branched-chain amino acids. Catalyzes the dehydration of (2R,3R)-2,3-dihydroxy-3-methylpentanoate (2,3-dihydroxy-3-methylvalerate) into 2-oxo-3-methylpentanoate (2-oxo-3-methylvalerate) and of (2R)-2,3-dihydroxy-3-methylbutanoate (2,3-dihydroxyisovalerate) into 2-oxo-3-methylbutanoate (2-oxoisovalerate), the penultimate precursor to L-isoleucine and L-valine, respectively. The chain is Dihydroxy-acid dehydratase from Mycobacterium bovis (strain ATCC BAA-935 / AF2122/97).